The primary structure comprises 431 residues: Tol-Pal system protein TolB (431 aa).

Positions 1-26 are cleaved as a signal peptide; sequence MSLMTKLGFRALVASCLIAAGSAANA. The interval 411 to 431 is disordered; sequence PQILSVQGGSVREPSWGPFMQ.

The protein belongs to the TolB family. The Tol-Pal system is composed of five core proteins: the inner membrane proteins TolA, TolQ and TolR, the periplasmic protein TolB and the outer membrane protein Pal. They form a network linking the inner and outer membranes and the peptidoglycan layer.

The protein resides in the periplasm. In terms of biological role, part of the Tol-Pal system, which plays a role in outer membrane invagination during cell division and is important for maintaining outer membrane integrity. This chain is Tol-Pal system protein TolB, found in Burkholderia multivorans (strain ATCC 17616 / 249).